Reading from the N-terminus, the 434-residue chain is 4-hydroxyphenylpyruvate dioxygenase (434 aa).

The interval 1–21 (MPPTPTTPAATGAAAAVTPEH) is disordered. The span at 7 to 19 (TPAATGAAAAVTP) shows a compositional bias: low complexity. 2 VOC domains span residues 41 to 192 (SFHH…FLPG) and 208 to 368 (RFDH…IFTK). Residues histidine 211, histidine 293, and glutamate 379 each contribute to the Fe cation site.

It belongs to the 4HPPD family. Fe cation is required as a cofactor.

It localises to the cytoplasm. It catalyses the reaction 3-(4-hydroxyphenyl)pyruvate + O2 = homogentisate + CO2. It participates in amino-acid degradation; L-phenylalanine degradation; acetoacetate and fumarate from L-phenylalanine: step 3/6. Its pathway is cofactor biosynthesis; prenylquinone biosynthesis. The polypeptide is 4-hydroxyphenylpyruvate dioxygenase (Hordeum vulgare (Barley)).